The following is a 343-amino-acid chain: Heat-inducible transcription repressor HrcA (343 aa).

This sequence belongs to the HrcA family.

In terms of biological role, negative regulator of class I heat shock genes (grpE-dnaK-dnaJ and groELS operons). Prevents heat-shock induction of these operons. The protein is Heat-inducible transcription repressor HrcA of Bacillus licheniformis (strain ATCC 14580 / DSM 13 / JCM 2505 / CCUG 7422 / NBRC 12200 / NCIMB 9375 / NCTC 10341 / NRRL NRS-1264 / Gibson 46).